The sequence spans 104 residues: Intracellular chorismate mutase (104 aa).

Positions 23–104 (AVPEIDDLRR…LRLGRGRLGY (82 aa)) constitute a Chorismate mutase domain. R59, V68, and E72 together coordinate chorismate.

In terms of assembly, homodimer. Probably interacts with AroG (MSMEG_4244).

The protein localises to the cytoplasm. It catalyses the reaction chorismate = prephenate. It participates in metabolic intermediate biosynthesis; prephenate biosynthesis; prephenate from chorismate: step 1/1. The formation of the complex with AroG activates the chorismate mutase activity. Catalyzes the Claisen rearrangement of chorismate to prephenate. Probably involved in the aromatic amino acid biosynthesis. The protein is Intracellular chorismate mutase of Mycolicibacterium smegmatis (strain ATCC 700084 / mc(2)155) (Mycobacterium smegmatis).